The chain runs to 131 residues: Class I hydrophobin 9 (131 aa).

Residues 1–23 (MFARRAISIFAFMLVALSIFAAA) form the signal peptide. Disulfide bonds link Cys52–Cys112, Cys59–Cys106, Cys60–Cys93, and Cys113–Cys126. Residue Asn53 is glycosylated (N-linked (GlcNAc...) asparagine). N-linked (GlcNAc...) asparagine glycosylation occurs at Asn115.

It belongs to the fungal hydrophobin family. Self-assembles to form functional amyloid fibrils called rodlets. Self-assembly into fibrillar rodlets occurs spontaneously at hydrophobic:hydrophilic interfaces and the rodlets further associate laterally to form amphipathic monolayers.

The protein localises to the secreted. Its subcellular location is the cell wall. In terms of biological role, aerial growth, conidiation, and dispersal of filamentous fungi in the environment rely upon a capability of their secreting small amphipathic proteins called hydrophobins (HPBs) with low sequence identity. Class I can self-assemble into an outermost layer of rodlet bundles on aerial cell surfaces, conferring cellular hydrophobicity that supports fungal growth, development and dispersal; whereas Class II form highly ordered films at water-air interfaces through intermolecular interactions but contribute nothing to the rodlet structure. In Flammulina velutipes (Agaricus velutipes), this protein is Class I hydrophobin 9.